A 641-amino-acid polypeptide reads, in one-letter code: Chaperone protein DnaK (641 aa).

Phosphothreonine; by autocatalysis is present on Thr-199. The segment covering 603-613 (YTQQGGTAGSE) has biased composition (polar residues). A disordered region spans residues 603-641 (YTQQGGTAGSETHSHEKAGGSGGDDVVDAEFEEVRDDKR). The span at 627–641 (DVVDAEFEEVRDDKR) shows a compositional bias: acidic residues.

The protein belongs to the heat shock protein 70 family.

In terms of biological role, acts as a chaperone. This chain is Chaperone protein DnaK, found in Methylococcus capsulatus (strain ATCC 33009 / NCIMB 11132 / Bath).